Consider the following 365-residue polypeptide: UDP-N-acetylglucosamine--N-acetylmuramyl-(pentapeptide) pyrophosphoryl-undecaprenol N-acetylglucosamine transferase (365 aa).

UDP-N-acetyl-alpha-D-glucosamine is bound by residues 19–21 (TGG), Asn131, Arg170, Ser201, Ile255, 274–279 (ALTVTE), and Gln300.

It belongs to the glycosyltransferase 28 family. MurG subfamily.

It is found in the cell inner membrane. The enzyme catalyses di-trans,octa-cis-undecaprenyl diphospho-N-acetyl-alpha-D-muramoyl-L-alanyl-D-glutamyl-meso-2,6-diaminopimeloyl-D-alanyl-D-alanine + UDP-N-acetyl-alpha-D-glucosamine = di-trans,octa-cis-undecaprenyl diphospho-[N-acetyl-alpha-D-glucosaminyl-(1-&gt;4)]-N-acetyl-alpha-D-muramoyl-L-alanyl-D-glutamyl-meso-2,6-diaminopimeloyl-D-alanyl-D-alanine + UDP + H(+). It participates in cell wall biogenesis; peptidoglycan biosynthesis. Functionally, cell wall formation. Catalyzes the transfer of a GlcNAc subunit on undecaprenyl-pyrophosphoryl-MurNAc-pentapeptide (lipid intermediate I) to form undecaprenyl-pyrophosphoryl-MurNAc-(pentapeptide)GlcNAc (lipid intermediate II). This chain is UDP-N-acetylglucosamine--N-acetylmuramyl-(pentapeptide) pyrophosphoryl-undecaprenol N-acetylglucosamine transferase, found in Acinetobacter baumannii (strain AB307-0294).